The chain runs to 355 residues: Serum paraoxonase/arylesterase 1 (355 aa).

A disulfide bridge connects residues C42 and C353. Residues E53 and D54 each contribute to the Ca(2+) site. Residue H115 is the Proton acceptor of the active site. Ca(2+) contacts are provided by I117, N168, D169, and N224. An N-linked (GlcNAc...) asparagine glycan is attached at N253. The Ca(2+) site is built by D269 and N270. N270 and N324 each carry an N-linked (GlcNAc...) asparagine glycan.

Belongs to the paraoxonase family. Homodimer. Heterooligomer with phosphate-binding protein (HPBP). Interacts with CLU. Ca(2+) is required as a cofactor. Post-translationally, glycosylated. The signal sequence is not cleaved. In terms of processing, present in two forms, form B contains a disulfide bond, form A does not. In terms of tissue distribution, plasma, associated with HDL (at protein level). Expressed in liver, but not in heart, brain, placenta, lung, skeletal muscle, kidney or pancreas.

The protein resides in the secreted. It is found in the extracellular space. It catalyses the reaction a phenyl acetate + H2O = a phenol + acetate + H(+). It carries out the reaction An aryl dialkyl phosphate + H2O = dialkyl phosphate + an aryl alcohol.. The catalysed reaction is an N-acyl-L-homoserine lactone + H2O = an N-acyl-L-homoserine + H(+). Its function is as follows. Hydrolyzes the toxic metabolites of a variety of organophosphorus insecticides. Capable of hydrolyzing a broad spectrum of organophosphate substrates and lactones, and a number of aromatic carboxylic acid esters. Mediates an enzymatic protection of low density lipoproteins against oxidative modification and the consequent series of events leading to atheroma formation. The chain is Serum paraoxonase/arylesterase 1 (PON1) from Homo sapiens (Human).